The sequence spans 92 residues: MTRSLKKGPFVDHHLVAKVEKAIATKDKKPVKTWSRRSMVLPEFIGLTIAVHNGKQHVPVYVTDQMVGHKLGEFALTRTFKGHPADKKVQKK.

This sequence belongs to the universal ribosomal protein uS19 family.

Protein S19 forms a complex with S13 that binds strongly to the 16S ribosomal RNA. The sequence is that of Small ribosomal subunit protein uS19 from Acidovorax sp. (strain JS42).